The chain runs to 403 residues: GTPase Obg (403 aa).

Residues 1 to 159 (MKFIDESLIR…RDLLLELMLL (159 aa)) form the Obg domain. Residues 160 to 333 (ADVGMLGFPN…LCRDIMDFII (174 aa)) form the OBG-type G domain. Residues 166-173 (GFPNAGKS), 191-195 (FTTLV), 213-216 (DIPG), 283-286 (NKID), and 314-316 (SAA) each bind GTP. S173 and T193 together coordinate Mg(2+). A disordered region spans residues 363 to 403 (EYQFDDDEDWDDDWTEEDDDEDWDDDWTEEDDEGIEFIYKP). Acidic residues predominate over residues 365-397 (QFDDDEDWDDDWTEEDDDEDWDDDWTEEDDEGI).

It belongs to the TRAFAC class OBG-HflX-like GTPase superfamily. OBG GTPase family. Monomer. Requires Mg(2+) as cofactor.

Its subcellular location is the cytoplasm. Its function is as follows. An essential GTPase which binds GTP, GDP and possibly (p)ppGpp with moderate affinity, with high nucleotide exchange rates and a fairly low GTP hydrolysis rate. Plays a role in control of the cell cycle, stress response, ribosome biogenesis and in those bacteria that undergo differentiation, in morphogenesis control. The chain is GTPase Obg from Haemophilus influenzae (strain PittEE).